The sequence spans 318 residues: Actin-related protein 2/3 complex subunit 2A (318 aa).

Residues 297–318 form a disordered region; it reads RSMNNKSFKRLGLNEVNHTNSK.

This sequence belongs to the ARPC2 family. In terms of assembly, component of the Arp2/3 complex composed of ARP2, ARP3, ARPC1/p41-ARC, ARPC2/p34-ARC, ARPC3/p21-ARC, ARPC4/p20-ARC and ARPC5/p16-ARC. Interacts with ARPC4. In terms of tissue distribution, expressed at low levels in all tissues with a relatively highest expression in inflorescences.

The protein localises to the cytoplasm. It is found in the cytoskeleton. The protein resides in the cell projection. Functions as actin-binding component of the Arp2/3 complex which is involved in regulation of actin polymerization and together with an activating nucleation-promoting factor (NPF) mediates the formation of branched actin networks. Seems to contact the mother actin filament. Arp2/3 complex plays a critical role in the control of cell morphogenesis via the modulation of cell polarity development. The polypeptide is Actin-related protein 2/3 complex subunit 2A (ARPC2A) (Arabidopsis thaliana (Mouse-ear cress)).